We begin with the raw amino-acid sequence, 361 residues long: Alcohol dehydrogenase 9 (361 aa).

Zn(2+) contacts are provided by Cys51, Thr53, His73, Cys104, Cys107, Cys110, Cys118, and Cys167. An alcohol is bound by residues Thr53 and His73. Thr53 is a binding site for NAD(+). Residues 192–197, Lys221, 278–280, and Lys356 contribute to the NAD(+) site; these read GLGGLG and LGA.

Belongs to the zinc-containing alcohol dehydrogenase family. Class-III subfamily. In terms of assembly, homodimer. The cofactor is Zn(2+).

The chain is Alcohol dehydrogenase 9 from Catharanthus roseus (Madagascar periwinkle).